A 366-amino-acid polypeptide reads, in one-letter code: GTP cyclohydrolase 1 type 2 homolog (366 aa).

A divalent metal cation is bound by residues His64, His65, Asp102, His326, and Glu329.

The protein belongs to the GTP cyclohydrolase I type 2/NIF3 family. Homohexamer.

The sequence is that of GTP cyclohydrolase 1 type 2 homolog from Staphylococcus epidermidis (strain ATCC 12228 / FDA PCI 1200).